Here is a 196-residue protein sequence, read N- to C-terminus: uncharacterized protein (196 aa).

A helical transmembrane segment spans residues 71 to 87; it reads YVKLIGTGCYVAILISG.

It localises to the membrane. This is an uncharacterized protein from Dictyostelium discoideum (Social amoeba).